Reading from the N-terminus, the 71-residue chain is Small ribosomal subunit protein bS21 (71 aa).

The protein belongs to the bacterial ribosomal protein bS21 family.

The chain is Small ribosomal subunit protein bS21 from Shewanella woodyi (strain ATCC 51908 / MS32).